Reading from the N-terminus, the 824-residue chain is RelA-associated inhibitor (824 aa).

M1 is subject to N-acetylmethionine. 2 disordered regions span residues 48–87 (SLWS…SPQK) and 99–271 (RSES…YERL). Residues S84, S100, S102, S110, S113, S119, and S120 each carry the phosphoserine modification. The residue at position 123 (T123) is a Phosphothreonine. S134 is modified (phosphoserine). Omega-N-methylarginine occurs at positions 137, 142, 144, 160, 167, and 180. 3 positions are modified to phosphoserine: S183, S187, and S203. Omega-N-methylarginine is present on R205. A Phosphothreonine modification is found at T275. At S279 the chain carries Phosphoserine. 2 disordered regions span residues 291–370 (SLDG…RPIP) and 388–501 (RAVL…QTVP). Phosphothreonine is present on T307. Residues S315, S331, and S338 each carry the phosphoserine modification. Residue T340 is modified to Phosphothreonine. Over residues 359-370 (QPRSTPRQRPIP) the composition is skewed to low complexity. Pro residues predominate over residues 400–424 (APPPKLPPQPPPQPQMQPQPQPQPQ). The segment covering 425 to 440 (MQPQSQAQPQTPAPQQ) has biased composition (low complexity). Phosphoserine occurs at positions 522, 563, and 593. The interval 547-614 (FHRHGGPGPG…SVLRKVGSPR (68 aa)) is disordered. Residues 575 to 597 (PPAPAPPAPIPPPAPPQSSPPEQ) are compositionally biased toward pro residues. ANK repeat units follow at residues 655–684 (EGIT…NVNS) and 688–717 (HGWT…AIFA). The region spanning 754–816 (MHNGVVYALW…PRNYFGLFPR (63 aa)) is the SH3 domain.

The protein belongs to the iASPP family. Interacts with TP63 and TP73. Interacts with RELA NF-kappa-B subunit and with SP1 via its C-terminal part. Interacts (via SH3 domain and ANK repeats) with p53/TP53; the interaction inhibits pro-apoptotic activity of p53/TP53. As to expression, most abundant in skin with high levels also found in heart, testis and stomach. In 15.5 dpc embryonic heart, expressed at higher levels in atria than ventricles.

The protein localises to the cytoplasm. It localises to the nucleus. Its function is as follows. Regulator that plays a central role in regulation of apoptosis and transcription via its interaction with NF-kappa-B and p53/TP53 proteins. Inhibits p53/TP53 function, possibly by preventing the association between p53/TP53 and ASPP1 or ASPP2, and therefore suppressing the subsequent activation of apoptosis. Is involved in NF-kappa-B dependent negative regulation of inflammatory response. This Mus musculus (Mouse) protein is RelA-associated inhibitor.